The chain runs to 339 residues: DNA-directed RNA polymerase subunit alpha (339 aa).

The segment at 1–233 (MVREEVAGST…DLFLPFLHAE (233 aa)) is alpha N-terminal domain (alpha-NTD). The segment at 264–339 (KKGIPLNCIF…IDLLKNKLSF (76 aa)) is alpha C-terminal domain (alpha-CTD).

This sequence belongs to the RNA polymerase alpha chain family. In terms of assembly, in plastids the minimal PEP RNA polymerase catalytic core is composed of four subunits: alpha, beta, beta', and beta''. When a (nuclear-encoded) sigma factor is associated with the core the holoenzyme is formed, which can initiate transcription.

The protein resides in the plastid. It is found in the chloroplast. The enzyme catalyses RNA(n) + a ribonucleoside 5'-triphosphate = RNA(n+1) + diphosphate. Functionally, DNA-dependent RNA polymerase catalyzes the transcription of DNA into RNA using the four ribonucleoside triphosphates as substrates. This is DNA-directed RNA polymerase subunit alpha from Psathyrostachys fragilis (Russian wild rye).